The following is a 64-amino-acid chain: MPKMKTKSGAAKRFLKTATGFKHKHAFKSHILTKMSTKRKRQLRGSSLLHPSDVAKVARMLRVR.

The protein belongs to the bacterial ribosomal protein bL35 family.

The sequence is that of Large ribosomal subunit protein bL35 from Pseudomonas putida (strain W619).